A 1278-amino-acid chain; its full sequence is ABC transporter B family member 11 (1278 aa).

Basic and acidic residues-rich tracts occupy residues 1-13 (MNGD…DSVS) and 21-35 (SPKE…EKSE). A disordered region spans residues 1–35 (MNGDGAREGDSVSHEPSTSKSPKEGEETKKEEKSE). The next 6 membrane-spanning stretches (helical) occupy residues 55–75 (VLLM…LPFM), 106–126 (FVYL…CWMI), 182–202 (FIQL…KGWL), 205–225 (LVML…ALIV), 285–305 (GLGL…AIWF), and 314–334 (GYTG…SMSL). The ABC transmembrane type-1 1 domain occupies 58 to 346 (MICGSIGAIG…TSPCVTAFAA (289 aa)). Positions 381-617 (IELKDVHFSY…SEGAYSQLIR (237 aa)) constitute an ABC transporter 1 domain. 416-423 (GESGSGKS) contacts ATP. 3 N-linked (GlcNAc...) asparagine glycosylation sites follow: asparagine 483, asparagine 568, and asparagine 653. A compositionally biased stretch (polar residues) spans 629 to 654 (ELSSGSSFRNSNLKKSMEGTSSVGNS). A disordered region spans residues 629-656 (ELSSGSSFRNSNLKKSMEGTSSVGNSSR). Residues 710–997 (LLLGTVAAAI…SSTFAPDSSK (288 aa)) enclose the ABC transmembrane type-1 2 domain. Helical transmembrane passes span 711 to 731 (LLGT…GILI) and 751 to 771 (FWAI…PTQM). The N-linked (GlcNAc...) asparagine glycan is linked to asparagine 806. The next 4 membrane-spanning stretches (helical) occupy residues 824-844 (ALVG…ASGL), 845-865 (IIAF…LPLI), 932-952 (GFIS…VYAT), and 971-991 (VFQV…SSTF). Positions 1032 to 1271 (IELRHLSFTY…EGGVYASLVQ (240 aa)) constitute an ABC transporter 2 domain. Residue 1067-1074 (GESGSGKS) coordinates ATP. Asparagine 1121 and asparagine 1222 each carry an N-linked (GlcNAc...) asparagine glycan.

This sequence belongs to the ABC transporter superfamily. ABCB family. Multidrug resistance exporter (TC 3.A.1.201) subfamily. As to expression, present in roots and flower buds.

Its subcellular location is the membrane. It carries out the reaction (indol-3-yl)acetate(in) + ATP + H2O = (indol-3-yl)acetate(out) + ADP + phosphate + H(+). Functionally, involved in the regulation of auxin transport required for pistil elongation. This is ABC transporter B family member 11 from Arabidopsis thaliana (Mouse-ear cress).